Reading from the N-terminus, the 129-residue chain is Iron-sulfur cluster assembly 1 homolog, mitochondrial (129 aa).

The N-terminal 12 residues, 1–12 (MSASLVRATVRA), are a transit peptide targeting the mitochondrion. The Fe cation site is built by C57, C121, and C123.

The protein belongs to the HesB/IscA family. In terms of assembly, interacts with CRY2, but not with CRY1 (in vitro).

The protein localises to the mitochondrion. In terms of biological role, involved in the maturation of mitochondrial 4Fe-4S proteins functioning late in the iron-sulfur cluster assembly pathway. Probably involved in the binding of an intermediate of Fe/S cluster assembly. The polypeptide is Iron-sulfur cluster assembly 1 homolog, mitochondrial (Isca1) (Mus musculus (Mouse)).